A 504-amino-acid chain; its full sequence is Xanthotoxol synthase (504 aa).

A helical membrane pass occupies residues 3–23 (PAAIFLILAIPIASVYLLFYH). Residues 363 to 368 (PGPLLI) form a substrate specificity region. C444 provides a ligand contact to heme.

Belongs to the cytochrome P450 family. Requires heme as cofactor.

The protein resides in the microsome membrane. The catalysed reaction is psoralen + reduced [NADPH--hemoprotein reductase] + O2 = xanthotoxol + oxidized [NADPH--hemoprotein reductase] + H2O + H(+). It catalyses the reaction 6-methoxycoumarin + reduced [NADPH--hemoprotein reductase] + O2 = scopoletin + oxidized [NADPH--hemoprotein reductase] + H2O + H(+). It functions in the pathway secondary metabolite biosynthesis. Functionally, involved in the biosynthesis of coumarins and furanocoumarins (FCs), natural products required for defense responses against attacks by predators with potential medical and agroindustrial usages such as anticoagulant, rodenticide and artificial vanilla substitutes. Catalyzes the conversion of psoralen into xanthotoxol and of 6-methoxycoumarin into scopoletin. Can also convert with a lower efficiency scopoletin into fraxetin and 7-methoxycoumarin into daphnetin-7-methylether, and use 7-methoxy-3-methylcoumarin as substrate. The polypeptide is Xanthotoxol synthase (Pastinaca sativa (Wild parsnip)).